A 493-amino-acid chain; its full sequence is tRNA-2-methylthio-N(6)-dimethylallyladenosine synthase (493 aa).

Positions 1 to 14 (MPMTGLLQTTLSTA) are enriched in polar residues. The tract at residues 1–31 (MPMTGLLQTTLSTADQDRSGPAATTGDTPAR) is disordered. One can recognise an MTTase N-terminal domain in the interval 35–155 (KRLHVITWGC…LGGMVRRAMN (121 aa)). [4Fe-4S] cluster-binding residues include cysteine 44, cysteine 80, cysteine 118, cysteine 199, cysteine 203, and cysteine 206. The 233-residue stretch at 185-417 (LAGGRTAFLT…QALLRTQQEA (233 aa)) folds into the Radical SAM core domain. Residues 420–482 (TACIGKTVNV…TNSLSATLPD (63 aa)) enclose the TRAM domain.

This sequence belongs to the methylthiotransferase family. MiaB subfamily. As to quaternary structure, monomer. Requires [4Fe-4S] cluster as cofactor.

It is found in the cytoplasm. It carries out the reaction N(6)-dimethylallyladenosine(37) in tRNA + (sulfur carrier)-SH + AH2 + 2 S-adenosyl-L-methionine = 2-methylsulfanyl-N(6)-dimethylallyladenosine(37) in tRNA + (sulfur carrier)-H + 5'-deoxyadenosine + L-methionine + A + S-adenosyl-L-homocysteine + 2 H(+). Functionally, catalyzes the methylthiolation of N6-(dimethylallyl)adenosine (i(6)A), leading to the formation of 2-methylthio-N6-(dimethylallyl)adenosine (ms(2)i(6)A) at position 37 in tRNAs that read codons beginning with uridine. The sequence is that of tRNA-2-methylthio-N(6)-dimethylallyladenosine synthase from Granulibacter bethesdensis (strain ATCC BAA-1260 / CGDNIH1).